The sequence spans 37 residues: Large ribosomal subunit protein bL36A (37 aa).

The protein belongs to the bacterial ribosomal protein bL36 family.

The sequence is that of Large ribosomal subunit protein bL36A from Kocuria rhizophila (strain ATCC 9341 / DSM 348 / NBRC 103217 / DC2201).